The sequence spans 85 residues: uncharacterized protein (85 aa).

2 helical membrane passes run 12–34 (ICLS…VLAF) and 49–71 (IPEF…NGFV).

It is found in the cell membrane. This is an uncharacterized protein from Archaeoglobus fulgidus (strain ATCC 49558 / DSM 4304 / JCM 9628 / NBRC 100126 / VC-16).